The chain runs to 1397 residues: MNQEVMNLFNPTAPTQTFDQIKISIASPERILSWSYGEIKKPETINYRTFKPERDGLFCARIFGPIKDYECLCGKYKRMKYKGIICEKCGVEVTLSKVRRERMGHIELAAPVAHIWFLKSLPSRIGLLLDMTLKDLERVLYFENYIVLEPGLTSLKERQLLTEEEYIDAQDQYGEDSFTAGIGAEAIRELMMALDLEKIAADLRVEIAESTSELKPKKLAKRLKLIEAFIESGNKPEWMIMTQIPVIPPELRPLVPLDGGRFATSDLNDLYRRVINRNNRLKRLMELRAPDIIIRNEKRMLQESVDALFDNGRRGRVITGANKRPLKSLADMLKGKQGRFRQNLLGKRVDYSGRSVIVVGPELKLHQCGLPKKMALELFKPFIYSRLEAKGLSATVKQAKKLVEKERPEVWEILEQVIREHPVLLNRAPTLHRLGIQAFEPVLIEGKAIQLHPLVCAAFNADFDGDQMAVHVPLSLEAQLEARVLMMSTNNILHPANGSPIIVPSQDIVLGLYYVTIQKDNEPGEGMVFGSVSEIEHALAVKAVTLHAKVKARYTTKDADGNSYTEVVDTTPGRMMVGELLPRHPNVPFDLVNRLLTKRDISKMIDVVYRHCGQKETVIFCDQIMALGFRQAFRAGISFGKDDMVIPEEKAKLVEETQTLATEYEQQYIDGLITQGEKYNKVVDAWAKCTDRVADVMMQKISAVQIDPETKREKQINSIYMMAHSGARGSPAQMKQLAGMRGLMAKPSGEIIETPIISNFKEGLTVLEYFNSTHGARKGLADTALKTANSGYLTRRLVDVAQDSIITEEDCGTIGGITVQPVIEAGDVIVSLGTRVLGRTTAEDVMNPATGEVLIPKNHLIDEADVDTIEEANVQGIKIRSVLTCEAANGVCGACYGRDLARGTPVNMGEAVGVIAAQSIGEPGTQLTMRTFHIGGTAQVVDSSFIESNHAGTIKIVNRNVVKDSNGVLVVMGRNVQVQIIDEHGGERASHKLTYGSRLKFDDGDKIERGQRISEWDPYTMPMLTEVNGIAEFEDLVDGVSIREVADEATGISSRVVVDWRASPRGSDLRPAVVVKDKNGKILKLANGNDARYLLSVDAILSVDNGAAVHAGDVLARIPTEGAKTRDITGGLPRVAELFEARRPKDHAIIAEATGRVEFGKDYKNKRRIIVHPVDESLEPIEYLIPKGKHISVQEGDVIEKGEFILDGHPAPHDILAISGVEELAAYLVNEVQDVYRLQGVAINDKHIEVIVRNMLQKVEVTSPGESITLPGEQLDRAEFDEMNAKLEAQGKTPATAVPVLLGITKASLQTRSFISAASFQETTRVLTEAAVSGKVDQLVGLKENVIVGRLIPAGTGGMLQRLRGEAQNRDDKILEDQGGATPTASTEIKEPAEGAA.

Residues C71, C73, C86, and C89 each coordinate Zn(2+). The Mg(2+) site is built by D462, D464, and D466. Residues C811, C885, C892, and C895 each coordinate Zn(2+). The interval 1368–1397 (QNRDDKILEDQGGATPTASTEIKEPAEGAA) is disordered. Over residues 1388–1397 (EIKEPAEGAA) the composition is skewed to basic and acidic residues.

This sequence belongs to the RNA polymerase beta' chain family. The RNAP catalytic core consists of 2 alpha, 1 beta, 1 beta' and 1 omega subunit. When a sigma factor is associated with the core the holoenzyme is formed, which can initiate transcription. Mg(2+) serves as cofactor. It depends on Zn(2+) as a cofactor.

The catalysed reaction is RNA(n) + a ribonucleoside 5'-triphosphate = RNA(n+1) + diphosphate. DNA-dependent RNA polymerase catalyzes the transcription of DNA into RNA using the four ribonucleoside triphosphates as substrates. This Parvibaculum lavamentivorans (strain DS-1 / DSM 13023 / NCIMB 13966) protein is DNA-directed RNA polymerase subunit beta'.